The chain runs to 254 residues: Imidazole glycerol phosphate synthase subunit HisF (254 aa).

Residues Asp-12 and Asp-131 contribute to the active site.

This sequence belongs to the HisA/HisF family. In terms of assembly, heterodimer of HisH and HisF.

It localises to the cytoplasm. It catalyses the reaction 5-[(5-phospho-1-deoxy-D-ribulos-1-ylimino)methylamino]-1-(5-phospho-beta-D-ribosyl)imidazole-4-carboxamide + L-glutamine = D-erythro-1-(imidazol-4-yl)glycerol 3-phosphate + 5-amino-1-(5-phospho-beta-D-ribosyl)imidazole-4-carboxamide + L-glutamate + H(+). The protein operates within amino-acid biosynthesis; L-histidine biosynthesis; L-histidine from 5-phospho-alpha-D-ribose 1-diphosphate: step 5/9. In terms of biological role, IGPS catalyzes the conversion of PRFAR and glutamine to IGP, AICAR and glutamate. The HisF subunit catalyzes the cyclization activity that produces IGP and AICAR from PRFAR using the ammonia provided by the HisH subunit. This is Imidazole glycerol phosphate synthase subunit HisF from Kocuria rhizophila (strain ATCC 9341 / DSM 348 / NBRC 103217 / DC2201).